Here is a 643-residue protein sequence, read N- to C-terminus: Ecto-NOX disulfide-thiol exchanger 1 (643 aa).

Residues 142-221 enclose the RRM domain; it reads KTVFVGGLPE…GRLHVDFAQA (80 aa). Coiled coils occupy residues 307-342 and 425-570; these read VQSANSHVRRLMNEKATHEQEMEEAKENFKNALTGI and QAYA…EALL.

It belongs to the ENOX family. Cu cation serves as cofactor. In terms of tissue distribution, expressed in lymphocyte cells, breast and breast cancer (at protein level). Found in the sera of cancer patients with a wide variety of cancers including breast, prostate, lung and ovarian cancers, leukemias, and lymphomas. Found also in the serum of healthy volunteers or patients with disorders other than cancer. Probably shed into serum by cancer cells.

It localises to the cell membrane. The protein localises to the secreted. It is found in the extracellular space. Its activity is regulated as follows. Not inhibited by the antitumor sulfonylurea LY181984, the vabilloid capsaicin, and retinoids. Functionally, probably acts as a terminal oxidase of plasma electron transport from cytosolic NAD(P)H via hydroquinones to acceptors at the cell surface. Hydroquinone oxidase activity alternates with a protein disulfide-thiol interchange/oxidoreductase activity which may control physical membrane displacements associated with vesicle budding or cell enlargement. The activities oscillate with a period length of 24 minutes and play a role in control of the ultradian cellular biological clock. This is Ecto-NOX disulfide-thiol exchanger 1 (ENOX1) from Homo sapiens (Human).